Consider the following 130-residue polypeptide: Riboflavin kinase (130 aa).

G10 to K15 serves as a coordination point for CDP. Mg(2+) is bound by residues T39 and N41. Residues T96 and E104 each coordinate FMN. V109–R112 provides a ligand contact to CDP.

This sequence belongs to the archaeal riboflavin kinase family. Mg(2+) serves as cofactor.

It carries out the reaction riboflavin + CTP = CDP + FMN + H(+). Its pathway is cofactor biosynthesis; FMN biosynthesis; FMN from riboflavin (CTP route): step 1/1. Its function is as follows. Catalyzes the CTP-dependent phosphorylation of riboflavin (vitamin B2) to form flavin mononucleotide (FMN). This is Riboflavin kinase from Methanococcus vannielii (strain ATCC 35089 / DSM 1224 / JCM 13029 / OCM 148 / SB).